The chain runs to 215 residues: Large ribosomal subunit protein uL1 (215 aa).

Belongs to the universal ribosomal protein uL1 family. As to quaternary structure, part of the 50S ribosomal subunit.

Functionally, binds directly to 23S rRNA. Probably involved in E site tRNA release. Protein L1 is also a translational repressor protein, it controls the translation of its operon by binding to its mRNA. The chain is Large ribosomal subunit protein uL1 from Methanospirillum hungatei JF-1 (strain ATCC 27890 / DSM 864 / NBRC 100397 / JF-1).